We begin with the raw amino-acid sequence, 540 residues long: GMP synthase [glutamine-hydrolyzing] (540 aa).

A Glutamine amidotransferase type-1 domain is found at 26–216; that stretch reads LIIILDFGSQ…VYHICDCEPT (191 aa). The active-site Nucleophile is Cys-103. Active-site residues include His-190 and Glu-192. Residues 217-415 form the GMPS ATP-PPase domain; it reads WTTAAFVEEA…IGLPEEIVQR (199 aa). 244–250 serves as a coordination point for ATP; the sequence is SGGVDSS.

As to quaternary structure, homodimer.

The catalysed reaction is XMP + L-glutamine + ATP + H2O = GMP + L-glutamate + AMP + diphosphate + 2 H(+). Its pathway is purine metabolism; GMP biosynthesis; GMP from XMP (L-Gln route): step 1/1. Catalyzes the synthesis of GMP from XMP. The polypeptide is GMP synthase [glutamine-hydrolyzing] (Nostoc punctiforme (strain ATCC 29133 / PCC 73102)).